The sequence spans 324 residues: Beta-ketoacyl-[acyl-carrier-protein] synthase III (324 aa).

Residues Cys-113 and His-251 contribute to the active site. The tract at residues 252–256 is ACP-binding; it reads QANKR. Asn-281 is a catalytic residue.

Belongs to the thiolase-like superfamily. FabH family. As to quaternary structure, homodimer.

The protein localises to the cytoplasm. The enzyme catalyses malonyl-[ACP] + acetyl-CoA + H(+) = 3-oxobutanoyl-[ACP] + CO2 + CoA. It participates in lipid metabolism; fatty acid biosynthesis. Functionally, catalyzes the condensation reaction of fatty acid synthesis by the addition to an acyl acceptor of two carbons from malonyl-ACP. Catalyzes the first condensation reaction which initiates fatty acid synthesis and may therefore play a role in governing the total rate of fatty acid production. Possesses both acetoacetyl-ACP synthase and acetyl transacylase activities. Its substrate specificity determines the biosynthesis of branched-chain and/or straight-chain of fatty acids. This Bartonella bacilliformis (strain ATCC 35685 / KC583 / Herrer 020/F12,63) protein is Beta-ketoacyl-[acyl-carrier-protein] synthase III.